A 349-amino-acid polypeptide reads, in one-letter code: MAGKKVCIVGSGNWGSAIAKIVGSNASQLAHFDPRVTMWVFEEDIGGRKLTEIINTQHENVKYLPGHKLPPNVVAVPDVVQAATGADILVFVVPHQFIGKICDQLKGHLKANTIGISLIKGIDEGPNGLKLISEVIGESLGIPMSVLMGANIASEVAEEKFCETTIGCKDPAQGQLLKELMQTPNFRITVVQEVDTVEICGALKNIVAVGAGFCDGLGFGDNTKAAVIRLGLMEMIAFAKLFCSGSVSSATFLESCGVADLITTCYGGRNRKVAEAFARTGKSIEQLEKEMLNGQKLQGPQTARELHSILQHKGLVDKFPLFTAVYKVCYEGQPVGEFICCLQNHPEHM.

An NAD(+)-binding site is contributed by 10–15 (GSGNWG). Lys-120 serves as a coordination point for substrate. Position 153 (Ala-153) interacts with NAD(+). Phosphoserine is present on Ser-154. The Proton acceptor role is filled by Lys-204. Arg-269 is a binding site for NAD(+). Position 269 to 270 (269 to 270 (RN)) interacts with substrate. Lys-289 is modified (N6-succinyllysine). NAD(+) contacts are provided by Lys-296 and Gln-298. A Phosphotyrosine modification is found at Tyr-326.

The protein belongs to the NAD-dependent glycerol-3-phosphate dehydrogenase family. Homodimer.

The protein resides in the cytoplasm. The catalysed reaction is sn-glycerol 3-phosphate + NAD(+) = dihydroxyacetone phosphate + NADH + H(+). Functionally, has glycerol-3-phosphate dehydrogenase activity. The protein is Glycerol-3-phosphate dehydrogenase [NAD(+)], cytoplasmic of Rattus norvegicus (Rat).